The chain runs to 454 residues: Cholesterol 7-desaturase nvd (454 aa).

2 helical membrane passes run 13 to 33 and 47 to 67; these read VLCP…LGAG and TTLS…LWGW. Positions 117–221 constitute a Rieske domain; the sequence is WYRALDSHLL…SCELNGMVFV (105 aa). Residues cysteine 158, histidine 160, cysteine 178, and histidine 181 each coordinate [2Fe-2S] cluster.

This sequence belongs to the cholesterol 7-desaturase family. It depends on [2Fe-2S] cluster as a cofactor.

The protein localises to the membrane. It carries out the reaction cholesterol + NADPH + O2 + H(+) = 7-dehydrocholesterol + NADP(+) + 2 H2O. It catalyses the reaction cholesterol + NADH + O2 + H(+) = 7-dehydrocholesterol + NAD(+) + 2 H2O. The protein operates within steroid hormone biosynthesis; dafachronic acid biosynthesis. Catalyzes the production of 7-dehydrocholesterol (7-DHC or cholesta-5,7-dien-3beta-ol) by inserting a double bond (desaturating) at the C7-C8 single bond of cholesterol. This reaction is the first step in the synthesis of the steroid hormone Delta(7)-dafachronic acid. This chain is Cholesterol 7-desaturase nvd (nvd), found in Xenopus laevis (African clawed frog).